Here is a 215-residue protein sequence, read N- to C-terminus: Nascent polypeptide-associated complex subunit alpha (215 aa).

The segment at 1-81 (MPGEATDTVP…SEKKARKAMS (81 aa)) is disordered. Residues 9-28 (VPATEQELPQPQAETGSGTE) are compositionally biased toward polar residues. Positions 29-42 (SDSDESVPELEEQD) are enriched in acidic residues. The residue at position 43 (Ser-43) is a Phosphoserine; by ILK1. Positions 44 to 57 (TQATTQQAQLAAAA) are enriched in low complexity. A required for DNA-binding region spans residues 69–80 (QSRSEKKARKAM). Positions 70-135 (SRSEKKARKA…AKIEDLSQQA (66 aa)) constitute an NAC-A/B domain. The interval 93 to 108 (RVTIRKSKNILFVITK) is RNA/DNA-binding. Ser-132 is modified (phosphoserine). Lys-142 is modified (N6-acetyllysine; alternate). Lys-142 is covalently cross-linked (Glycyl lysine isopeptide (Lys-Gly) (interchain with G-Cter in SUMO2); alternate). Thr-159 carries the phosphothreonine; by GSK3-beta modification. Residue Thr-161 is modified to Phosphothreonine. Phosphoserine is present on residues Ser-166, Ser-186, Ser-191, and Ser-203. The region spanning 176–213 (VEVKDIELVMSQANVSRAKAVRALKNNSNDIVNAIMEL) is the UBA domain.

The protein belongs to the NAC-alpha family. As to quaternary structure, part of the nascent polypeptide-associated complex (NAC), which is a heterodimer of NACA and BTF3 (via NAC-A/B domains). NAC associates with ribosomes through the BTF3/NACB subunit and contacts the ribosomal protein L23, which is positioned near the exiting site. Both subunits can contact nascent polypeptide chains. NACA may also form homodimers, and only this form binds DNA. Interacts with TBP and JUN. In terms of processing, phosphorylation of Ser-43 by ILK during cell adhesion may promote nuclear localization. Phosphorylation of Thr-159 by GSK3B may promote proteasome mediated degradation.

It localises to the cytoplasm. The protein resides in the nucleus. Functionally, prevents inappropriate targeting of non-secretory polypeptides to the endoplasmic reticulum (ER). Binds to nascent polypeptide chains as they emerge from the ribosome and blocks their interaction with the signal recognition particle (SRP), which normally targets nascent secretory peptides to the ER. Also reduces the inherent affinity of ribosomes for protein translocation sites in the ER membrane (M sites). May act as a specific coactivator for JUN, binding to DNA and stabilizing the interaction of JUN homodimers with target gene promoters. The chain is Nascent polypeptide-associated complex subunit alpha (NACA) from Bos taurus (Bovine).